We begin with the raw amino-acid sequence, 144 residues long: Small ribosomal subunit protein eS10A (144 aa).

The segment at 90 to 144 is disordered; sequence THKRQVRPTAPRAGRPEPRERASADAGYRRAEKKDEGAAPSGFAPSFRGGFGRPQ. Residues 103 to 126 show a composition bias toward basic and acidic residues; that stretch reads GRPEPRERASADAGYRRAEKKDEG.

This sequence belongs to the eukaryotic ribosomal protein eS10 family. Component of the small ribosomal subunit (SSU). Mature yeast ribosomes consist of a small (40S) and a large (60S) subunit. The 40S small subunit contains 1 molecule of ribosomal RNA (18S rRNA) and at least 33 different proteins. The large 60S subunit contains 3 rRNA molecules (25S, 5.8S and 5S rRNA) and at least 46 different proteins. eS10 interacts with GCN1 (via middle region); this interaction is direct and promotes GCN2 kinase activity.

The protein resides in the cytoplasm. Its function is as follows. Component of the ribosome, a large ribonucleoprotein complex responsible for the synthesis of proteins in the cell. The small ribosomal subunit (SSU) binds messenger RNAs (mRNAs) and translates the encoded message by selecting cognate aminoacyl-transfer RNA (tRNA) molecules. The large subunit (LSU) contains the ribosomal catalytic site termed the peptidyl transferase center (PTC), which catalyzes the formation of peptide bonds, thereby polymerizing the amino acids delivered by tRNAs into a polypeptide chain. The nascent polypeptides leave the ribosome through a tunnel in the LSU and interact with protein factors that function in enzymatic processing, targeting, and the membrane insertion of nascent chains at the exit of the ribosomal tunnel. eS10 plays a role as a positive regulator of the GCN2 kinase activity by stimulating GCN1-mediated GCN2 activation. The protein is Small ribosomal subunit protein eS10A (rps1001) of Schizosaccharomyces pombe (strain 972 / ATCC 24843) (Fission yeast).